A 201-amino-acid chain; its full sequence is ADP-ribosylation factor-related protein 1 (201 aa).

Met-1 bears the N-acetylmethionine mark. GTP is bound by residues 24 to 31 (GLDNAGKT), 75 to 79 (DLGGQ), and 134 to 137 (NKQD).

Belongs to the small GTPase superfamily. Arf family. As to quaternary structure, interacts with SYS1.

The protein localises to the golgi apparatus. It localises to the trans-Golgi network. In terms of biological role, trans-Golgi-associated GTPase that regulates protein sorting. Controls the targeting of ARL1 and its effector to the trans-Golgi. Required for the lipidation of chylomicrons in the intestine and required for VLDL lipidation in the liver. The sequence is that of ADP-ribosylation factor-related protein 1 (Arfrp1) from Mus musculus (Mouse).